The following is a 325-amino-acid chain: Ribose-phosphate pyrophosphokinase (325 aa).

Residues asparagine 45 to glutamate 47 and arginine 104 to glutamine 105 each bind ATP. 2 residues coordinate Mg(2+): histidine 138 and aspartate 178. Residue lysine 202 is part of the active site. Residues arginine 204, aspartate 230, and aspartate 234–threonine 238 each bind D-ribose 5-phosphate.

It belongs to the ribose-phosphate pyrophosphokinase family. Class I subfamily. As to quaternary structure, homohexamer. Requires Mg(2+) as cofactor.

It localises to the cytoplasm. The catalysed reaction is D-ribose 5-phosphate + ATP = 5-phospho-alpha-D-ribose 1-diphosphate + AMP + H(+). It participates in metabolic intermediate biosynthesis; 5-phospho-alpha-D-ribose 1-diphosphate biosynthesis; 5-phospho-alpha-D-ribose 1-diphosphate from D-ribose 5-phosphate (route I): step 1/1. Involved in the biosynthesis of the central metabolite phospho-alpha-D-ribosyl-1-pyrophosphate (PRPP) via the transfer of pyrophosphoryl group from ATP to 1-hydroxyl of ribose-5-phosphate (Rib-5-P). This is Ribose-phosphate pyrophosphokinase from Corynebacterium glutamicum (strain ATCC 13032 / DSM 20300 / JCM 1318 / BCRC 11384 / CCUG 27702 / LMG 3730 / NBRC 12168 / NCIMB 10025 / NRRL B-2784 / 534).